Consider the following 298-residue polypeptide: Elongation factor Ts (298 aa).

The interval 79-82 is involved in Mg(2+) ion dislocation from EF-Tu; that stretch reads TDFV.

This sequence belongs to the EF-Ts family.

It is found in the cytoplasm. In terms of biological role, associates with the EF-Tu.GDP complex and induces the exchange of GDP to GTP. It remains bound to the aminoacyl-tRNA.EF-Tu.GTP complex up to the GTP hydrolysis stage on the ribosome. This Cereibacter sphaeroides (strain ATCC 17029 / ATH 2.4.9) (Rhodobacter sphaeroides) protein is Elongation factor Ts.